Consider the following 340-residue polypeptide: Large ribosomal subunit protein uL10 (340 aa).

The interval 305-340 (APQPAEEKVEEAEEEEEEEEEASEEEALAGLGALFG) is disordered. The span at 312–331 (KVEEAEEEEEEEEEASEEEA) shows a compositional bias: acidic residues.

Belongs to the universal ribosomal protein uL10 family. Part of the 50S ribosomal subunit. Forms part of the ribosomal stalk which helps the ribosome interact with GTP-bound translation factors. Forms a heptameric L10(L12)2(L12)2(L12)2 complex, where L10 forms an elongated spine to which the L12 dimers bind in a sequential fashion.

Functionally, forms part of the ribosomal stalk, playing a central role in the interaction of the ribosome with GTP-bound translation factors. This chain is Large ribosomal subunit protein uL10, found in Thermococcus gammatolerans (strain DSM 15229 / JCM 11827 / EJ3).